A 387-amino-acid chain; its full sequence is Glutamate N-acetyltransferase (387 aa).

Residues Thr-140, Lys-162, Thr-173, Glu-257, Asn-382, and Thr-387 each contribute to the substrate site. Thr-173 (nucleophile) is an active-site residue.

The protein belongs to the ArgJ family. In terms of assembly, heterotetramer of two alpha and two beta chains.

The protein resides in the cytoplasm. It catalyses the reaction N(2)-acetyl-L-ornithine + L-glutamate = N-acetyl-L-glutamate + L-ornithine. It functions in the pathway amino-acid biosynthesis; L-arginine biosynthesis; L-ornithine and N-acetyl-L-glutamate from L-glutamate and N(2)-acetyl-L-ornithine (cyclic): step 1/1. In terms of biological role, catalyzes the transfer of the acetyl group from N(2)-acetylornithine to glutamate, forming N-acetylglutamate and L-ornithine. The sequence is that of Glutamate N-acetyltransferase from Methanopyrus kandleri (strain AV19 / DSM 6324 / JCM 9639 / NBRC 100938).